The primary structure comprises 356 residues: 3-isopropylmalate dehydrogenase (356 aa).

Arg-95, Arg-105, Arg-133, and Asp-223 together coordinate substrate. Residues Asp-223, Asp-247, and Asp-251 each contribute to the Mg(2+) site. An NAD(+)-binding site is contributed by Gly-281–Asn-293.

Belongs to the isocitrate and isopropylmalate dehydrogenases family. LeuB type 1 subfamily. Homodimer. Requires Mg(2+) as cofactor. The cofactor is Mn(2+).

The protein resides in the cytoplasm. It carries out the reaction (2R,3S)-3-isopropylmalate + NAD(+) = 4-methyl-2-oxopentanoate + CO2 + NADH. Its pathway is amino-acid biosynthesis; L-leucine biosynthesis; L-leucine from 3-methyl-2-oxobutanoate: step 3/4. Functionally, catalyzes the oxidation of 3-carboxy-2-hydroxy-4-methylpentanoate (3-isopropylmalate) to 3-carboxy-4-methyl-2-oxopentanoate. The product decarboxylates to 4-methyl-2 oxopentanoate. The chain is 3-isopropylmalate dehydrogenase from Neisseria meningitidis serogroup A / serotype 4A (strain DSM 15465 / Z2491).